We begin with the raw amino-acid sequence, 211 residues long: Thiamine-phosphate synthase (211 aa).

4-amino-2-methyl-5-(diphosphooxymethyl)pyrimidine-binding positions include 35-39 (QLRDK) and asparagine 67. Mg(2+) contacts are provided by aspartate 68 and aspartate 87. Serine 106 lines the 4-amino-2-methyl-5-(diphosphooxymethyl)pyrimidine pocket. 132-134 (TGS) contacts 2-[(2R,5Z)-2-carboxy-4-methylthiazol-5(2H)-ylidene]ethyl phosphate. Lysine 135 is a binding site for 4-amino-2-methyl-5-(diphosphooxymethyl)pyrimidine. Residues glycine 163 and 183–184 (IS) each bind 2-[(2R,5Z)-2-carboxy-4-methylthiazol-5(2H)-ylidene]ethyl phosphate.

It belongs to the thiamine-phosphate synthase family. Mg(2+) is required as a cofactor.

It catalyses the reaction 2-[(2R,5Z)-2-carboxy-4-methylthiazol-5(2H)-ylidene]ethyl phosphate + 4-amino-2-methyl-5-(diphosphooxymethyl)pyrimidine + 2 H(+) = thiamine phosphate + CO2 + diphosphate. The catalysed reaction is 2-(2-carboxy-4-methylthiazol-5-yl)ethyl phosphate + 4-amino-2-methyl-5-(diphosphooxymethyl)pyrimidine + 2 H(+) = thiamine phosphate + CO2 + diphosphate. It carries out the reaction 4-methyl-5-(2-phosphooxyethyl)-thiazole + 4-amino-2-methyl-5-(diphosphooxymethyl)pyrimidine + H(+) = thiamine phosphate + diphosphate. Its pathway is cofactor biosynthesis; thiamine diphosphate biosynthesis; thiamine phosphate from 4-amino-2-methyl-5-diphosphomethylpyrimidine and 4-methyl-5-(2-phosphoethyl)-thiazole: step 1/1. Condenses 4-methyl-5-(beta-hydroxyethyl)thiazole monophosphate (THZ-P) and 2-methyl-4-amino-5-hydroxymethyl pyrimidine pyrophosphate (HMP-PP) to form thiamine monophosphate (TMP). The protein is Thiamine-phosphate synthase of Methanoculleus marisnigri (strain ATCC 35101 / DSM 1498 / JR1).